The primary structure comprises 1017 residues: Protein translocase subunit SecA 1 (1017 aa).

Residues glutamine 143, 161–165 (GEGKT), and aspartate 661 contribute to the ATP site. The segment at 978 to 999 (GLNDDDEPLPAQPITTEQKPGR) is disordered. Zn(2+) is bound by residues cysteine 1003, cysteine 1005, cysteine 1014, and cysteine 1015.

Belongs to the SecA family. As to quaternary structure, monomer and homodimer. Part of the essential Sec protein translocation apparatus which comprises SecA, SecYEG and auxiliary proteins SecDF. Other proteins may also be involved. Zn(2+) serves as cofactor.

Its subcellular location is the cell inner membrane. The protein localises to the cytoplasm. It carries out the reaction ATP + H2O + cellular proteinSide 1 = ADP + phosphate + cellular proteinSide 2.. In terms of biological role, part of the Sec protein translocase complex. Interacts with the SecYEG preprotein conducting channel. Has a central role in coupling the hydrolysis of ATP to the transfer of proteins into and across the cell membrane, serving as an ATP-driven molecular motor driving the stepwise translocation of polypeptide chains across the membrane. The polypeptide is Protein translocase subunit SecA 1 (Chlorobium chlorochromatii (strain CaD3)).